Reading from the N-terminus, the 963-residue chain is Probable sucrose-phosphate synthase 2 (963 aa).

The disordered stretch occupies residues 111–150 (KLRTDTNADMSEDLFEGEKGEDAGDPSVAYGDSTTGSSPK).

The protein belongs to the glycosyltransferase 1 family. In terms of assembly, homodimer or homotetramer. In terms of tissue distribution, expressed in germinating seeds.

It carries out the reaction beta-D-fructose 6-phosphate + UDP-alpha-D-glucose = sucrose 6(F)-phosphate + UDP + H(+). The protein operates within glycan biosynthesis; sucrose biosynthesis; sucrose from D-fructose 6-phosphate and UDP-alpha-D-glucose: step 1/2. Activity is regulated by phosphorylation and moderated by concentration of metabolites and light. Functionally, plays a role in photosynthetic sucrose synthesis by catalyzing the rate-limiting step of sucrose biosynthesis from UDP-glucose and fructose- 6-phosphate. Involved in the regulation of carbon partitioning in the leaves of plants. May regulate the synthesis of sucrose and therefore play a major role as a limiting factor in the export of photoassimilates out of the leaf. Plays a role for sucrose availability that is essential for plant growth and fiber elongation. This chain is Probable sucrose-phosphate synthase 2 (SPS2), found in Oryza sativa subsp. japonica (Rice).